Consider the following 211-residue polypeptide: UPF0329 protein ECU07_1880/ECU10_0020 (211 aa).

This sequence belongs to the UPF0329 family.

This chain is UPF0329 protein ECU07_1880/ECU10_0020, found in Encephalitozoon cuniculi (strain GB-M1) (Microsporidian parasite).